The sequence spans 382 residues: D-galactonate dehydratase (382 aa).

A Mg(2+)-binding site is contributed by aspartate 183. The Proton donor role is filled by histidine 185. Glutamate 209 and glutamate 235 together coordinate Mg(2+). Histidine 285 functions as the Proton acceptor in the catalytic mechanism.

The protein belongs to the mandelate racemase/muconate lactonizing enzyme family. GalD subfamily. Mg(2+) is required as a cofactor.

It catalyses the reaction D-galactonate = 2-dehydro-3-deoxy-D-galactonate + H2O. The protein operates within carbohydrate acid metabolism; D-galactonate degradation; D-glyceraldehyde 3-phosphate and pyruvate from D-galactonate: step 1/3. Its function is as follows. Catalyzes the dehydration of D-galactonate to 2-keto-3-deoxy-D-galactonate. The sequence is that of D-galactonate dehydratase from Salmonella gallinarum (strain 287/91 / NCTC 13346).